Consider the following 247-residue polypeptide: MNTQLEVCIDNIESLHNAIAGGPTRIELCSSLALGGLTPSYGFMQQAAKHSTIPVYAMIRPRQGDFFYSEEEIELMRWDIEAAKQAGLNGVVLGVLTQDGNIHMPYATALCEFAQALGLGVTFHRAFDQCRDAEKALEEVISLGCERILTSGLAPSAPQGIDVLKALVEQAQGRIALMAGAGVNADNVGQIVEQTKVTEVHLSGKTTRPSHMTFIAEQSKMGAADVDDFSIPVTNTDAIANMVTALN.

The protein belongs to the CutC family.

The protein resides in the cytoplasm. In Vibrio campbellii (strain ATCC BAA-1116), this protein is PF03932 family protein CutC.